Reading from the N-terminus, the 177-residue chain is Novel acetylcholine receptor chaperone (177 aa).

At 1–5 (MASPR) the chain is on the cytoplasmic side. The helical transmembrane segment at 6 to 26 (TVTVVALSVALGLFFVFMGTI) threads the bilayer. Residues 27 to 61 (KLTPRLSKDAYSEMKRAYKSYVRALPLLKKMGINS) lie on the Lumenal side of the membrane. Residues 43-54 (AYKSYVRALPLL) are interaction with NGFR. The helical transmembrane segment at 62 to 82 (ILLRKSIGALEVACGIVMTLV) threads the bilayer. Topologically, residues 83-88 (PGRPKD) are cytoplasmic. Residues 89-109 (VANFFLLLLVLAVLFFHQLVG) form a helical membrane-spanning segment. Residues 110–114 (DPLKR) are Lumenal-facing. The helical transmembrane segment at 115–132 (YAHALVFGILLTCRLLIA) threads the bilayer. The Cytoplasmic portion of the chain corresponds to 133–177 (RKPEDRSSEKKSSPPGNAGSDGNAGNTEEQPSLYEKAPQGKMKLS). The interval 136 to 177 (EDRSSEKKSSPPGNAGSDGNAGNTEEQPSLYEKAPQGKMKLS) is disordered.

The protein belongs to the DoxX family. May interact with NGFR. Interacts with RPN1, RPN2 and CANX.

The protein resides in the peroxisome membrane. It localises to the cytoplasmic vesicle. It is found in the endoplasmic reticulum membrane. Functionally, molecular chaperone which mediates the proper assembly and functional expression of the nicotinic acetylcholine receptors (nAChRs) throughout the brain. Essential for the proper folding, assembly, function and surface trafficking of alpha-7 (CHRNA7), alpha-4-beta-2, alpha-3-beta-2 and alpha-3-beta-4 receptors. Stably associates with ribophorin-1 (RPN1) and ribophorin-2 (RPN2) (components of the oligosaccharyl transferase (OST) complex) and with calnexin (CANX), both of which are critical for NACHO-mediated effects on CHRNA7 assembly and function. Facilitates the proper folding and assembly of alpha-6-beta-2 and alpha-6-beta-2-beta-3 receptors and acts at early stages of the nAChRs subunit assembly. Promotes the expression of the alpha-4(2):beta-2(3) stoichiometric form over the alpha-4(3):beta-2(2) form. This Bos taurus (Bovine) protein is Novel acetylcholine receptor chaperone (TMEM35A).